A 188-amino-acid chain; its full sequence is Large ribosomal subunit protein uL5 (188 aa).

The protein belongs to the universal ribosomal protein uL5 family. As to quaternary structure, part of the 50S ribosomal subunit; contacts the 5S rRNA and probably tRNA. Forms a bridge to the 30S subunit in the 70S ribosome.

Its function is as follows. This is one of the proteins that bind and probably mediate the attachment of the 5S RNA into the large ribosomal subunit, where it forms part of the central protuberance. In the 70S ribosome it contacts protein S13 of the 30S subunit (bridge B1b), connecting the 2 subunits; this bridge is implicated in subunit movement. May contact the P site tRNA; the 5S rRNA and some of its associated proteins might help stabilize positioning of ribosome-bound tRNAs. The protein is Large ribosomal subunit protein uL5 of Pyrococcus horikoshii (strain ATCC 700860 / DSM 12428 / JCM 9974 / NBRC 100139 / OT-3).